Consider the following 694-residue polypeptide: Phosphatase and actin regulator 4 (694 aa).

Disordered regions lie at residues 1–354 and 375–405; these read MEDP…SPLV and QDISQQEDQKTEVPKKIQDQSFGESHIPSRL. The span at 45 to 54 shows a compositional bias: basic residues; sequence KPWKWRKKKS. Basic and acidic residues predominate over residues 55 to 84; it reads SDKFKETSEVLERKISMRKPREELVKRGVL. The stretch at 63-88 is one RPEL 1 repeat; that stretch reads EVLERKISMRKPREELVKRGVLLEDP. A phosphoserine mark is found at serine 116, serine 118, serine 129, and serine 145. Composition is skewed to low complexity over residues 184-209 and 231-249; these read AGSTARSVSSTSGSTTVTSAATTAAT and TLPAAPASANTAATTTAPA. Residues 250 to 259 show a composition bias toward pro residues; that stretch reads KQPPIPPPKP. 4 positions are modified to phosphoserine: serine 264, serine 285, serine 335, and serine 337. Over residues 329-352 the composition is skewed to pro residues; sequence LIIPPSSPSPPLPTHIPPEPPRSP. A compositionally biased stretch (basic and acidic residues) spans 381–392; sequence EDQKTEVPKKIQ. Residue serine 420 is modified to Phosphoserine. Position 425 is a phosphothreonine (threonine 425). Residues serine 436, serine 446, serine 457, serine 503, serine 505, serine 549, and serine 582 each carry the phosphoserine modification. Residues 467–562 are disordered; sequence VPDDEEEEQT…TNLNSWPRKS (96 aa). Polar residues predominate over residues 546–559; sequence SRPSEPETNLNSWP. RPEL repeat units lie at residues 575–600 and 613–638; these read NTLIRRLSQRPTAEELEQRNILQPKN and RRLTRKLSQRPTVAELLARKILRFNE. The segment at 589–608 is disordered; sequence ELEQRNILQPKNEADRQAEK. Position 620 is a phosphoserine (serine 620).

This sequence belongs to the phosphatase and actin regulator family. Binds PPP1CA and actin.

The protein localises to the cytoplasm. Its subcellular location is the cell projection. The protein resides in the lamellipodium. Its function is as follows. Regulator of protein phosphatase 1 (PP1) required for neural tube and optic fissure closure, and enteric neural crest cell (ENCCs) migration during development. Acts as an activator of PP1 by interacting with PPP1CA and preventing phosphorylation of PPP1CA at 'Thr-320'. During neural tube closure, localizes to the ventral neural tube and activates PP1, leading to down-regulate cell proliferation within cranial neural tissue and the neural retina. Also acts as a regulator of migration of enteric neural crest cells (ENCCs) by activating PP1, leading to dephosphorylation and subsequent activation of cofilin (COF1 or COF2) and repression of the integrin signaling through the RHO/ROCK pathway. The polypeptide is Phosphatase and actin regulator 4 (Phactr4) (Mus musculus (Mouse)).